A 339-amino-acid polypeptide reads, in one-letter code: Paired box protein Pax-9 (339 aa).

Positions A2 to K128 form a DNA-binding region, paired. The PAI subdomain stretch occupies residues E5–T61. Residues T80–K128 are RED subdomain.

Its subcellular location is the nucleus. The chain is Paired box protein Pax-9 (PAX9) from Gallus gallus (Chicken).